Here is a 78-residue protein sequence, read N- to C-terminus: Acyl carrier protein (78 aa).

Positions 1 to 77 (MSEVEKKVID…DAIDYIEKNL (77 aa)) constitute a Carrier domain. Position 37 is an O-(pantetheine 4'-phosphoryl)serine (serine 37).

This sequence belongs to the acyl carrier protein (ACP) family. 4'-phosphopantetheine is transferred from CoA to a specific serine of apo-ACP by AcpS. This modification is essential for activity because fatty acids are bound in thioester linkage to the sulfhydryl of the prosthetic group.

Its subcellular location is the cytoplasm. Its pathway is lipid metabolism; fatty acid biosynthesis. In terms of biological role, carrier of the growing fatty acid chain in fatty acid biosynthesis. This chain is Acyl carrier protein, found in Porphyromonas gingivalis (strain ATCC 33277 / DSM 20709 / CIP 103683 / JCM 12257 / NCTC 11834 / 2561).